Consider the following 479-residue polypeptide: Glycogen synthase (479 aa).

Residue Lys15 coordinates ADP-alpha-D-glucose.

Belongs to the glycosyltransferase 1 family. Bacterial/plant glycogen synthase subfamily.

The enzyme catalyses [(1-&gt;4)-alpha-D-glucosyl](n) + ADP-alpha-D-glucose = [(1-&gt;4)-alpha-D-glucosyl](n+1) + ADP + H(+). Its pathway is glycan biosynthesis; glycogen biosynthesis. Synthesizes alpha-1,4-glucan chains using ADP-glucose. The polypeptide is Glycogen synthase (Pectobacterium atrosepticum (strain SCRI 1043 / ATCC BAA-672) (Erwinia carotovora subsp. atroseptica)).